The following is an 814-amino-acid chain: Oxysterol-binding protein-related protein 1C (814 aa).

A PH domain is found at 103 to 235; the sequence is GNGIAGILYK…WVEALQAVKD (133 aa). A coiled-coil region spans residues 300–367; that stretch reads LLIDTLRQLE…AEEEFDEEEN (68 aa). Disordered stretches follow at residues 319 to 366 and 379 to 411; these read VVDE…DEEE and SSFK…PSIK. A compositionally biased stretch (acidic residues) spans 347–366; it reads ESDDDNERGDAAEEEFDEEE. The span at 379–394 shows a compositional bias: low complexity; that stretch reads SSFKSSGSGFRTSSFS. Acidic residues predominate over residues 395-407; it reads SDEDGFESEDDID.

This sequence belongs to the OSBP family. In terms of tissue distribution, expressed in roots, leaves, stems, flowers and pollen.

May be involved in the transport of sterols. This is Oxysterol-binding protein-related protein 1C (ORP1C) from Arabidopsis thaliana (Mouse-ear cress).